Consider the following 264-residue polypeptide: Claudin-18 (264 aa).

Residues 1-6 lie on the Cytoplasmic side of the membrane; it reads MATTTC. A helical transmembrane segment spans residues 7–27; sequence QVVGLLLSLLGLAGCIAATGM. Residues 28–80 are Extracellular-facing; the sequence is DMWSTQDLYDNPVTAVFQYEGLWRSCVQQSSGFTECRPYFTILGLPAMLQAVR. Residues 81–101 traverse the membrane as a helical segment; sequence ALMIVGIVLGVIGILVSIFAL. At 102 to 122 the chain is on the cytoplasmic side; it reads KCIRIGSMDDSAKAKMTLTSG. A helical membrane pass occupies residues 123 to 143; the sequence is ILFIISGICAIIGVSVFANML. At 144 to 176 the chain is on the extracellular side; that stretch reads VTNFWMSTANMYSGMGGMGGMVQTVQTRYTFGA. Residues 177–197 form a helical membrane-spanning segment; the sequence is ALFVGWVAGGLTLIGGVMMCI. Over 198–264 the chain is Cytoplasmic; it reads ACRGLTPDDS…QSHPTKYDYV (67 aa). Residues 198–264 form a required for role in regulation of RANKL-induced osteoclast differentiation region; sequence ACRGLTPDDS…QSHPTKYDYV (67 aa). Serine 217 bears the Phosphoserine mark. The interval 241-264 is disordered; that stretch reads KKIYDGGARTEDDEQSHPTKYDYV. The segment covering 242-264 has biased composition (basic and acidic residues); sequence KIYDGGARTEDDEQSHPTKYDYV.

The protein belongs to the claudin family. In terms of assembly, interacts with TJP2/ZO-2. Interacts with TJP1/ZO-1. Interacts with YAP1 (phosphorylated); the interaction sequesters YAP1 away from the nucleus and thereby restricts transcription of YAP1 target genes. Interacts with CLDN19. As to expression, expressed in the lung (at protein level). Expressed in lung. Expressed in the stomach. In terms of tissue distribution, expressed in lung. As to expression, expressed in stomach. Expressed in bone. Expressed in stomach.

It is found in the cell junction. It localises to the tight junction. The protein localises to the cell membrane. The protein resides in the lateral cell membrane. Involved in alveolar fluid homeostasis via regulation of alveolar epithelial tight junction composition and therefore ion transport and solute permeability, potentially via downstream regulation of the actin cytoskeleton organization and beta-2-adrenergic signaling. Required for lung alveolarization and maintenance of the paracellular alveolar epithelial barrier. Acts to maintain epithelial progenitor cell proliferation and organ size, via regulation of YAP1 localization away from the nucleus and thereby restriction of YAP1 target gene transcription. Acts as a negative regulator of RANKL-induced osteoclast differentiation, potentially via relocation of TJP2/ZO-2 away from the nucleus, subsequently involved in bone resorption in response to calcium deficiency. Mediates the osteoprotective effects of estrogen, potentially via acting downstream of estrogen signaling independently of RANKL signaling pathways. Its function is as follows. Involved in the maintenance of homeostasis of the alveolar microenvironment via regulation of pH and subsequent T-cell activation in the alveolar space, is therefore indirectly involved in limiting C.neoformans infection. In terms of biological role, required for the formation of the gastric paracellular barrier via its role in tight junction formation, thereby involved in the response to gastric acidification. This is Claudin-18 (Cldn18) from Mus musculus (Mouse).